Reading from the N-terminus, the 205-residue chain is Adenylyl-sulfate kinase (205 aa).

Residue 31-38 participates in ATP binding; the sequence is GLSGAGKS. Ser-105 serves as the catalytic Phosphoserine intermediate.

It belongs to the APS kinase family.

It carries out the reaction adenosine 5'-phosphosulfate + ATP = 3'-phosphoadenylyl sulfate + ADP + H(+). It functions in the pathway sulfur metabolism; hydrogen sulfide biosynthesis; sulfite from sulfate: step 2/3. Its function is as follows. Catalyzes the synthesis of activated sulfate. The protein is Adenylyl-sulfate kinase of Shewanella putrefaciens (strain CN-32 / ATCC BAA-453).